A 37-amino-acid chain; its full sequence is Bacteriocin lactococcin MMFII (37 aa).

Cysteines 9 and 14 form a disulfide.

It is found in the secreted. Its function is as follows. Bacteriocin active against Listeria monocytogenes and Lactococcus cremoris. The protein is Bacteriocin lactococcin MMFII of Lactococcus lactis subsp. lactis (Streptococcus lactis).